The following is a 392-amino-acid chain: Large ribosomal subunit protein uL3 (392 aa).

It belongs to the universal ribosomal protein uL3 family.

It is found in the cytoplasm. Functionally, the L3 protein is a component of the large subunit of cytoplasmic ribosomes. This chain is Large ribosomal subunit protein uL3 (rpl3), found in Aspergillus fumigatus (strain ATCC MYA-4609 / CBS 101355 / FGSC A1100 / Af293) (Neosartorya fumigata).